We begin with the raw amino-acid sequence, 162 residues long: Large ribosomal subunit protein uL10 (162 aa).

Belongs to the universal ribosomal protein uL10 family. As to quaternary structure, part of the ribosomal stalk of the 50S ribosomal subunit. The N-terminus interacts with L11 and the large rRNA to form the base of the stalk. The C-terminus forms an elongated spine to which L12 dimers bind in a sequential fashion forming a multimeric L10(L12)X complex.

In terms of biological role, forms part of the ribosomal stalk, playing a central role in the interaction of the ribosome with GTP-bound translation factors. This Aliarcobacter butzleri (strain RM4018) (Arcobacter butzleri) protein is Large ribosomal subunit protein uL10.